Consider the following 174-residue polypeptide: Shikimate kinase (174 aa).

10 to 15 (GSGKTA) provides a ligand contact to ATP. Thr-14 contacts Mg(2+). Asp-32, Arg-56, and Gly-78 together coordinate substrate. Arg-118 is an ATP binding site. Residue Arg-137 participates in substrate binding. Arg-154 is an ATP binding site.

The protein belongs to the shikimate kinase family. Monomer. Mg(2+) is required as a cofactor.

Its subcellular location is the cytoplasm. The enzyme catalyses shikimate + ATP = 3-phosphoshikimate + ADP + H(+). Its pathway is metabolic intermediate biosynthesis; chorismate biosynthesis; chorismate from D-erythrose 4-phosphate and phosphoenolpyruvate: step 5/7. Its function is as follows. Catalyzes the specific phosphorylation of the 3-hydroxyl group of shikimic acid using ATP as a cosubstrate. In Symbiobacterium thermophilum (strain DSM 24528 / JCM 14929 / IAM 14863 / T), this protein is Shikimate kinase.